A 131-amino-acid polypeptide reads, in one-letter code: Dihydroneopterin aldolase 2 (131 aa).

Substrate is bound by residues glutamate 29, tyrosine 61, and 80 to 81 (LE). The Proton donor/acceptor role is filled by lysine 107.

It belongs to the DHNA family. Homooctamer. Forms a hollow cylinder assembled from two ring-shaped tetramers. In terms of tissue distribution, expressed in roots, leaves, stems and siliques.

It catalyses the reaction 7,8-dihydroneopterin = 6-hydroxymethyl-7,8-dihydropterin + glycolaldehyde. It participates in cofactor biosynthesis; tetrahydrofolate biosynthesis; 2-amino-4-hydroxy-6-hydroxymethyl-7,8-dihydropteridine diphosphate from 7,8-dihydroneopterin triphosphate: step 3/4. In terms of biological role, catalyzes the conversion of 7,8-dihydroneopterin into 6-hydroxymethyl-7,8-dihydropterin, a biosynthetic precursor of the vitamin tetrahydrofolate. Can use L-threo-dihydroneopterin and D-erythro-dihydroneopterin as substrates for the formation of 6-hydroxymethyldihydropterin, but it can also catalyze the epimerization of carbon 2' of dihydroneopterin and dihydromonapterin. The chain is Dihydroneopterin aldolase 2 from Arabidopsis thaliana (Mouse-ear cress).